A 183-amino-acid chain; its full sequence is 3-hydroxydecanoyl-[acyl-carrier-protein] dehydratase (183 aa).

Histidine 77 is a catalytic residue.

The protein belongs to the thioester dehydratase family. FabA subfamily. Homodimer.

It localises to the cytoplasm. The enzyme catalyses a (3R)-hydroxyacyl-[ACP] = a (2E)-enoyl-[ACP] + H2O. The catalysed reaction is (3R)-hydroxydecanoyl-[ACP] = (2E)-decenoyl-[ACP] + H2O. It catalyses the reaction (2E)-decenoyl-[ACP] = (3Z)-decenoyl-[ACP]. Its pathway is lipid metabolism; fatty acid biosynthesis. Necessary for the introduction of cis unsaturation into fatty acids. Catalyzes the dehydration of (3R)-3-hydroxydecanoyl-ACP to E-(2)-decenoyl-ACP and then its isomerization to Z-(3)-decenoyl-ACP. Can catalyze the dehydratase reaction for beta-hydroxyacyl-ACPs with saturated chain lengths up to 16:0, being most active on intermediate chain length. The sequence is that of 3-hydroxydecanoyl-[acyl-carrier-protein] dehydratase from Hahella chejuensis (strain KCTC 2396).